The chain runs to 147 residues: Peptide deformylase 1 (147 aa).

Positions 90 and 132 each coordinate Fe cation. Residue Glu133 is part of the active site. Fe cation is bound at residue His136.

Belongs to the polypeptide deformylase family. Fe(2+) serves as cofactor.

It catalyses the reaction N-terminal N-formyl-L-methionyl-[peptide] + H2O = N-terminal L-methionyl-[peptide] + formate. Its function is as follows. Removes the formyl group from the N-terminal Met of newly synthesized proteins. Requires at least a dipeptide for an efficient rate of reaction. N-terminal L-methionine is a prerequisite for activity but the enzyme has broad specificity at other positions. In Clostridium perfringens (strain 13 / Type A), this protein is Peptide deformylase 1.